The sequence spans 281 residues: 3-hydroxyanthranilate 3,4-dioxygenase (281 aa).

The interval 1–162 is domain A (catalytic); that stretch reads MSGVTAIEIP…SNEFKTGKPG (162 aa). Residue Arg-45 coordinates O2. His-49, Glu-55, and His-93 together coordinate Fe cation. Glu-55 is a binding site for substrate. Substrate is bound by residues Arg-97 and Glu-107. Residues 163–179 form a linker region; it reads KGTFACNAPYEARWTDL. A domain B region spans residues 180 to 281; sequence PVPINRKEFI…GFAITIRMPA (102 aa).

This sequence belongs to the 3-HAO family. The cofactor is Fe(2+).

It localises to the cytoplasm. It catalyses the reaction 3-hydroxyanthranilate + O2 = (2Z,4Z)-2-amino-3-carboxymuconate 6-semialdehyde. Its pathway is cofactor biosynthesis; NAD(+) biosynthesis; quinolinate from L-kynurenine: step 3/3. In terms of biological role, catalyzes the oxidative ring opening of 3-hydroxyanthranilate to 2-amino-3-carboxymuconate semialdehyde, which spontaneously cyclizes to quinolinate. The chain is 3-hydroxyanthranilate 3,4-dioxygenase (haao-1) from Caenorhabditis elegans.